Here is a 34-residue protein sequence, read N- to C-terminus: SGSDGGVCPKILKKCRRDSDCPGACICRGNGYCG.

Residues 1–34 (SGSDGGVCPKILKKCRRDSDCPGACICRGNGYCG) constitute a cross-link (cyclopeptide (Ser-Gly)). A cross-link ((2-aminosuccinimidyl)acetic acid (Asp-Gly); alternate) is located at residues 4–5 (DG). Positions 4–5 (DG) form a cross-link, isoaspartyl glycine isopeptide (Asp-Gly); alternate. Intrachain disulfides connect C8-C25, C15-C27, and C21-C33.

Post-translationally, a cyclic succinimide probably forms by loss of water between Asp-4 and Gly-5, that can then rehydrate to either the original peptide bond or to a beta-aspartyl isopeptide bond. Three isoforms of MCoTI-II are detected, two with the parent molecular weight, corresponding to the unmodified and proposed isopeptide forms, and one with a molecular weight 18 Da lower, corresponding to a succinimide cross-linked form. This is a cyclic peptide.

The protein resides in the secreted. In terms of biological role, inhibits trypsin; probably participates in a plant defense mechanism. This is Trypsin inhibitor 2 from Momordica cochinchinensis (Spiny bitter cucumber).